The chain runs to 104 residues: NADH-quinone oxidoreductase subunit K (104 aa).

Helical transmembrane passes span 7 to 27 (PDMA…GVLV), 31 to 51 (LLFM…AFVA), and 63 to 83 (VMFL…LAIL).

Belongs to the complex I subunit 4L family. In terms of assembly, NDH-1 is composed of 14 different subunits. Subunits NuoA, H, J, K, L, M, N constitute the membrane sector of the complex.

The protein localises to the cell inner membrane. It carries out the reaction a quinone + NADH + 5 H(+)(in) = a quinol + NAD(+) + 4 H(+)(out). NDH-1 shuttles electrons from NADH, via FMN and iron-sulfur (Fe-S) centers, to quinones in the respiratory chain. The immediate electron acceptor for the enzyme in this species is believed to be ubiquinone. Couples the redox reaction to proton translocation (for every two electrons transferred, four hydrogen ions are translocated across the cytoplasmic membrane), and thus conserves the redox energy in a proton gradient. This Gluconacetobacter diazotrophicus (strain ATCC 49037 / DSM 5601 / CCUG 37298 / CIP 103539 / LMG 7603 / PAl5) protein is NADH-quinone oxidoreductase subunit K.